A 124-amino-acid chain; its full sequence is Protein MGF 110-8L (124 aa).

The N-terminal stretch at 1–16 (MKVLILVLLGVVILQA) is a signal peptide. Residue Asn-76 is glycosylated (N-linked (GlcNAc...) asparagine; by host).

Belongs to the asfivirus MGF 110 family.

Its function is as follows. Plays a role in virus cell tropism, and may be required for efficient virus replication in macrophages. This chain is Protein MGF 110-8L, found in African swine fever virus (isolate Pig/Kenya/KEN-50/1950) (ASFV).